The primary structure comprises 120 residues: uncharacterized protein (120 aa).

A helical transmembrane segment spans residues 47 to 63 (VSIVIGLCTVLISAGAG).

The protein resides in the membrane. This is an uncharacterized protein from Sinorhizobium fredii (strain NBRC 101917 / NGR234).